Here is an 89-residue protein sequence, read N- to C-terminus: MAHKKAGGSSRNGRDSAGRRLGVKKFGGETVIPGNIILRQRGTKWWPGDNVGMGKDHTLFATVEGNVSFKKGFKGRTFVSVLPVAEAAE.

The tract at residues methionine 1 to glycine 22 is disordered.

It belongs to the bacterial ribosomal protein bL27 family.

In Dinoroseobacter shibae (strain DSM 16493 / NCIMB 14021 / DFL 12), this protein is Large ribosomal subunit protein bL27.